The following is a 376-amino-acid chain: Glucose-1-phosphate adenylyltransferase (376 aa).

Residues Tyr101, Gly166, 181–182 (EK), and Ser192 each bind alpha-D-glucose 1-phosphate.

It belongs to the bacterial/plant glucose-1-phosphate adenylyltransferase family. In terms of assembly, homotetramer.

The enzyme catalyses alpha-D-glucose 1-phosphate + ATP + H(+) = ADP-alpha-D-glucose + diphosphate. Its pathway is glycan biosynthesis; glycogen biosynthesis. Its function is as follows. Involved in the biosynthesis of ADP-glucose, a building block required for the elongation reactions to produce glycogen. Catalyzes the reaction between ATP and alpha-D-glucose 1-phosphate (G1P) to produce pyrophosphate and ADP-Glc. This is Glucose-1-phosphate adenylyltransferase from Bacillus cereus (strain Q1).